Here is a 140-residue protein sequence, read N- to C-terminus: Nucleoside diphosphate kinase (140 aa).

The ATP site is built by K11, F59, R87, T93, R104, and N114. H117 (pros-phosphohistidine intermediate) is an active-site residue.

Belongs to the NDK family. As to quaternary structure, homotetramer. Mg(2+) is required as a cofactor.

The protein resides in the cytoplasm. It catalyses the reaction a 2'-deoxyribonucleoside 5'-diphosphate + ATP = a 2'-deoxyribonucleoside 5'-triphosphate + ADP. The catalysed reaction is a ribonucleoside 5'-diphosphate + ATP = a ribonucleoside 5'-triphosphate + ADP. Major role in the synthesis of nucleoside triphosphates other than ATP. The ATP gamma phosphate is transferred to the NDP beta phosphate via a ping-pong mechanism, using a phosphorylated active-site intermediate. The chain is Nucleoside diphosphate kinase from Rhodopseudomonas palustris (strain ATCC BAA-98 / CGA009).